The sequence spans 307 residues: tRNA pseudouridine synthase B (307 aa).

The active-site Nucleophile is Asp48.

The protein belongs to the pseudouridine synthase TruB family. Type 1 subfamily.

The enzyme catalyses uridine(55) in tRNA = pseudouridine(55) in tRNA. Functionally, responsible for synthesis of pseudouridine from uracil-55 in the psi GC loop of transfer RNAs. The chain is tRNA pseudouridine synthase B from Neisseria meningitidis serogroup B (strain ATCC BAA-335 / MC58).